A 500-amino-acid polypeptide reads, in one-letter code: Beta-glucosidase 30 (500 aa).

Residues 1–25 form the signal peptide; sequence MGIRMGRRLLFTLFLGALFCNGVYA. Q46 contacts a beta-D-glucoside. N-linked (GlcNAc...) asparagine glycosylation is found at N63 and N114. Residues H149 and 194–195 each bind a beta-D-glucoside; that span reads NE. E195 functions as the Proton donor in the catalytic mechanism. A disulfide bridge links C214 with C222. Y338 contributes to the a beta-D-glucoside binding site. N363 carries N-linked (GlcNAc...) asparagine glycosylation. E409 serves as a coordination point for a beta-D-glucoside. E409 functions as the Nucleophile in the catalytic mechanism. N-linked (GlcNAc...) asparagine glycans are attached at residues N416 and N417. A beta-D-glucoside contacts are provided by residues W456, 463–464, and F472; that span reads EW.

Belongs to the glycosyl hydrolase 1 family.

It carries out the reaction Hydrolysis of terminal, non-reducing beta-D-glucosyl residues with release of beta-D-glucose.. The protein is Beta-glucosidase 30 (BGLU30) of Oryza sativa subsp. japonica (Rice).